A 597-amino-acid polypeptide reads, in one-letter code: Arginine--tRNA ligase (597 aa).

The 'HIGH' region motif lies at proline 125–histidine 135.

It belongs to the class-I aminoacyl-tRNA synthetase family. In terms of assembly, monomer.

It localises to the cytoplasm. It catalyses the reaction tRNA(Arg) + L-arginine + ATP = L-arginyl-tRNA(Arg) + AMP + diphosphate. This is Arginine--tRNA ligase from Porphyromonas gingivalis (strain ATCC 33277 / DSM 20709 / CIP 103683 / JCM 12257 / NCTC 11834 / 2561).